A 388-amino-acid chain; its full sequence is Palmitoyltransferase ZDHHC18-B (388 aa).

Residues 1 to 33 (MKNREYQQIDPQALATPTPTPPPRSLPEHKPRR) are disordered. At 1–58 (MKNREYQQIDPQALATPTPTPPPRSLPEHKPRRARRKWEVFPGKNRFYCDGRIIVARQ) the chain is on the cytoplasmic side. The chain crosses the membrane as a helical span at residues 59–79 (SGVLPLTLGLILLTSGLFFIF). Topologically, residues 80 to 87 (DCPFLVKH) are lumenal. Residues 88–108 (LTSCIPAIGGVLFVFVIISLL) traverse the membrane as a helical segment. Residues 109-205 (QTSFTDPGIL…GNCVGKRNYR (97 aa)) lie on the Cytoplasmic side of the membrane. The region spanning 162–212 (KYCFTCKIFRPPRTSHCSLCDNCVERFDHHCPWVGNCVGKRNYRFFYTFIV) is the DHHC domain. C192 functions as the S-palmitoyl cysteine intermediate in the catalytic mechanism. Residues 206-226 (FFYTFIVSLSFLTAFIFGCVT) traverse the membrane as a helical segment. Residues 227–253 (THLALRSQGGNGLVNALQSSPASALEL) lie on the Lumenal side of the membrane. The helical transmembrane segment at 254–274 (VVCFFSVWSILGLSGFHTYLV) threads the bilayer. Topologically, residues 275-388 (AANLTTNEDI…AISMQNHSTA (114 aa)) are cytoplasmic.

The protein belongs to the DHHC palmitoyltransferase family. ERF2/ZDHHC9 subfamily.

Its subcellular location is the golgi apparatus membrane. It catalyses the reaction L-cysteinyl-[protein] + hexadecanoyl-CoA = S-hexadecanoyl-L-cysteinyl-[protein] + CoA. Palmitoyltransferase that catalyzes the addition of palmitate onto various protein substrates, such as CGAS, HRAS and LCK. The chain is Palmitoyltransferase ZDHHC18-B from Danio rerio (Zebrafish).